The following is a 108-amino-acid chain: Thioredoxin (108 aa).

Positions 2-108 constitute a Thioredoxin domain; that stretch reads NKIIELTDQN…LKDFLDENIK (107 aa). The cysteines at positions 32 and 35 are disulfide-linked.

This sequence belongs to the thioredoxin family.

In terms of biological role, participates in various redox reactions through the reversible oxidation of its active center dithiol to a disulfide and catalyzes dithiol-disulfide exchange reactions. The chain is Thioredoxin (trxA) from Buchnera aphidicola subsp. Schizaphis graminum (strain Sg).